An 81-amino-acid chain; its full sequence is Neuronatin (81 aa).

The protein belongs to the neuronatin family.

Its function is as follows. May participate in the maintenance of segment identity in the hindbrain and pituitary development, and maturation or maintenance of the overall structure of the nervous system. May function as a regulatory subunit of ion channels. The protein is Neuronatin (NNAT) of Mesocricetus auratus (Golden hamster).